The following is a 98-amino-acid chain: MHRVPRLTTPWANRDLQRAWEKTYQDHRKKVQNAQPLVDTHPPQIYSHLCLKFKKLKMEEERLSIIDRNNYLLLQRVASAMKTRGQTDGRNNFTQRRS.

Belongs to the CFAP97 family. As to expression, expressed in a number of tissues including brain, thymus, lung, heart, liver, spleen, kidney and testis.

This is an uncharacterized protein from Mus musculus (Mouse).